Consider the following 635-residue polypeptide: Chaperone protein DnaK (635 aa).

At threonine 198 the chain carries Phosphothreonine; by autocatalysis. The disordered stretch occupies residues 598-635 (YAKAQPGEEQAGGAPHEGEAKDEKVVDADFEEVKEDKK). The span at 613-624 (HEGEAKDEKVVD) shows a compositional bias: basic and acidic residues. Positions 625 to 635 (ADFEEVKEDKK) are enriched in acidic residues.

The protein belongs to the heat shock protein 70 family.

In terms of biological role, acts as a chaperone. This Geotalea uraniireducens (strain Rf4) (Geobacter uraniireducens) protein is Chaperone protein DnaK.